We begin with the raw amino-acid sequence, 164 residues long: MSDVENQPFFNIQRVYLKDMSLEQPNSPAIFLEQDMPSVEVEVDVKADRLAESVFEVVVSGTVTAKVKDKVAFLIEAKQAGIFDIRNIPDEQLDPLVGIACPTILFPYLRSNIADAITRAGFPPIHLAEINFQALYEQRLAQLQQQAGAAAGAPNGAPNGTTLN.

It belongs to the SecB family. Homotetramer, a dimer of dimers. One homotetramer interacts with 1 SecA dimer.

Its subcellular location is the cytoplasm. Its function is as follows. One of the proteins required for the normal export of preproteins out of the cell cytoplasm. It is a molecular chaperone that binds to a subset of precursor proteins, maintaining them in a translocation-competent state. It also specifically binds to its receptor SecA. The polypeptide is Protein-export protein SecB (Burkholderia orbicola (strain MC0-3)).